A 72-amino-acid polypeptide reads, in one-letter code: Large ribosomal subunit protein bL28 (72 aa).

The protein belongs to the bacterial ribosomal protein bL28 family.

The polypeptide is Large ribosomal subunit protein bL28 (Pelodictyon phaeoclathratiforme (strain DSM 5477 / BU-1)).